The chain runs to 469 residues: 3-isopropylmalate dehydratase large subunit (469 aa).

[4Fe-4S] cluster-binding residues include C347, C407, and C410. A compositionally biased stretch (polar residues) spans 424–441 (SASSSNRNFKGRQGSPSG). Residues 424–443 (SASSSNRNFKGRQGSPSGRT) form a disordered region.

It belongs to the aconitase/IPM isomerase family. LeuC type 1 subfamily. Heterodimer of LeuC and LeuD. The cofactor is [4Fe-4S] cluster.

It carries out the reaction (2R,3S)-3-isopropylmalate = (2S)-2-isopropylmalate. The protein operates within amino-acid biosynthesis; L-leucine biosynthesis; L-leucine from 3-methyl-2-oxobutanoate: step 2/4. Functionally, catalyzes the isomerization between 2-isopropylmalate and 3-isopropylmalate, via the formation of 2-isopropylmaleate. This chain is 3-isopropylmalate dehydratase large subunit, found in Prochlorococcus marinus (strain MIT 9312).